The primary structure comprises 598 residues: Elongation factor 4 (598 aa).

The region spanning 4–181 (KKIRNFAIIA…AIVNLIPPPQ (178 aa)) is the tr-type G domain. Residues 16-21 (DHGKST) and 128-131 (NKID) each bind GTP.

It belongs to the TRAFAC class translation factor GTPase superfamily. Classic translation factor GTPase family. LepA subfamily.

It localises to the cell membrane. The catalysed reaction is GTP + H2O = GDP + phosphate + H(+). Its function is as follows. Required for accurate and efficient protein synthesis under certain stress conditions. May act as a fidelity factor of the translation reaction, by catalyzing a one-codon backward translocation of tRNAs on improperly translocated ribosomes. Back-translocation proceeds from a post-translocation (POST) complex to a pre-translocation (PRE) complex, thus giving elongation factor G a second chance to translocate the tRNAs correctly. Binds to ribosomes in a GTP-dependent manner. This chain is Elongation factor 4, found in Mesomycoplasma hyopneumoniae (strain 232) (Mycoplasma hyopneumoniae).